The sequence spans 549 residues: S-methyl thiourocanate hydratase (549 aa).

The NAD(+) site is built by Met49, Gly173, Met174, Gly175, Asp193, Ser198, Asn239, Ala240, Gln260, Val270, and Tyr318.

Belongs to the urocanase family. S-methyl thiourocanate hydratase subfamily. NAD(+) serves as cofactor.

It carries out the reaction S-methyl-(E)-thiourocanate + H2O = S-methyl-thiohydantoin-5-propanoate. In terms of biological role, hydratase involved in the catabolism of S-methyl ergothioneine. Catalyzes the 1,4-addition of H(2)O to S-methyl thiourocanate, leading to the formation of S-methyl-thiohydantoin-5-propanoate, the second step in S-methyl ergothioneine degradation. Cannot use urocanate or thiourocanate as substrate. This Variovorax sp. (strain JCM 16519 / RA8) protein is S-methyl thiourocanate hydratase.